A 691-amino-acid chain; its full sequence is DNA ligase (691 aa).

Residues 41-45 (DAEYD), 90-91 (SL), and E130 contribute to the NAD(+) site. The N6-AMP-lysine intermediate role is filled by K132. The NAD(+) site is built by R153, E190, K307, and K331. C425, C428, C443, and C449 together coordinate Zn(2+). The BRCT domain occupies 610 to 691 (APQGVLAGKT…MHTLLEGHAR (82 aa)).

It belongs to the NAD-dependent DNA ligase family. LigA subfamily. The cofactor is Mg(2+). Mn(2+) serves as cofactor.

The enzyme catalyses NAD(+) + (deoxyribonucleotide)n-3'-hydroxyl + 5'-phospho-(deoxyribonucleotide)m = (deoxyribonucleotide)n+m + AMP + beta-nicotinamide D-nucleotide.. Functionally, DNA ligase that catalyzes the formation of phosphodiester linkages between 5'-phosphoryl and 3'-hydroxyl groups in double-stranded DNA using NAD as a coenzyme and as the energy source for the reaction. It is essential for DNA replication and repair of damaged DNA. The chain is DNA ligase from Burkholderia pseudomallei (strain 1106a).